The sequence spans 103 residues: Large ribosomal subunit protein uL24 (103 aa).

Belongs to the universal ribosomal protein uL24 family. As to quaternary structure, part of the 50S ribosomal subunit.

In terms of biological role, one of two assembly initiator proteins, it binds directly to the 5'-end of the 23S rRNA, where it nucleates assembly of the 50S subunit. One of the proteins that surrounds the polypeptide exit tunnel on the outside of the subunit. This chain is Large ribosomal subunit protein uL24, found in Corynebacterium urealyticum (strain ATCC 43042 / DSM 7109).